A 439-amino-acid chain; its full sequence is Tol-Pal system protein TolB (439 aa).

Positions 1–22 (MKKPLRWLAALTVLLLPLSALA) are cleaved as a signal peptide.

Belongs to the TolB family. In terms of assembly, the Tol-Pal system is composed of five core proteins: the inner membrane proteins TolA, TolQ and TolR, the periplasmic protein TolB and the outer membrane protein Pal. They form a network linking the inner and outer membranes and the peptidoglycan layer.

It localises to the periplasm. Functionally, part of the Tol-Pal system, which plays a role in outer membrane invagination during cell division and is important for maintaining outer membrane integrity. This is Tol-Pal system protein TolB from Xanthomonas oryzae pv. oryzae (strain MAFF 311018).